The following is a 221-amino-acid chain: MAASRPLSRFWEWGKNIVCVGRNYADHVREMRSAVLSEPVLFLKPSTAYAPEGSPILMPAYTRNLHHELELGVVMGRRCRAVPEAAAMDYVGGYALCLDMTARDVQDECKKKGLPWTLAKSFTASCPVSAFVPKEKIPDPHKLKLWLKVNGELRQEGETSSMIFSIPYIISYVSKIITLEEGDIILTGTPKGVGPVKENDEIEAGIHGLVSMRFKVEKPEY.

A mitochondrion-targeting transit peptide spans 1 to 24 (MAASRPLSRFWEWGKNIVCVGRNY). Phosphoserine is present on S37. Positions 68, 70, and 99 each coordinate Mg(2+). N6-acetyllysine is present on K110. K112 carries the N6-succinyllysine modification.

Belongs to the FAH family. As to quaternary structure, homodimer. The cofactor is Mg(2+). It depends on Mn(2+) as a cofactor.

Its subcellular location is the mitochondrion. It is found in the cytoplasm. The protein resides in the cytosol. It carries out the reaction oxaloacetate = enol-oxaloacetate. The catalysed reaction is oxaloacetate + H(+) = pyruvate + CO2. The enzyme catalyses a 3-acylpyruvate + H2O = a carboxylate + pyruvate + H(+). It catalyses the reaction acetylpyruvate + H2O = acetate + pyruvate + H(+). It carries out the reaction 3-fumarylpyruvate + H2O = fumarate + pyruvate + H(+). Oxaloacetate decarboxylation is competitively inhibited by oxalate. Functionally, tautomerase that converts enol-oxaloacetate, a strong inhibitor of succinate dehydrogenase, to the physiological keto form of oxaloacetate. It is thereby required to maximize aerobic respiration efficiency by preventing succinate dehydrogenase inhibition. Also acts as a weak oxaloacetate decarboxylase (ODx), catalyzing the decarboxylation of oxaloacetate (OAA) to pyruvate and CO(2), and as such is likely a regulatory enzyme in the TCA cycle. Also displays acylpyruvase activity, being able to hydrolyze acetylpyruvate and fumarylpyruvate in vitro. In Pongo abelii (Sumatran orangutan), this protein is Oxaloacetate tautomerase FAHD1, mitochondrial (FAHD1).